We begin with the raw amino-acid sequence, 163 residues long: ATP synthase subunit b 1 (163 aa).

The chain crosses the membrane as a helical span at residues 6 to 26 (LAELWVAVAFLLFVGILIYVG).

This sequence belongs to the ATPase B chain family. In terms of assembly, F-type ATPases have 2 components, F(1) - the catalytic core - and F(0) - the membrane proton channel. F(1) has five subunits: alpha(3), beta(3), gamma(1), delta(1), epsilon(1). F(0) has three main subunits: a(1), b(2) and c(10-14). The alpha and beta chains form an alternating ring which encloses part of the gamma chain. F(1) is attached to F(0) by a central stalk formed by the gamma and epsilon chains, while a peripheral stalk is formed by the delta and b chains.

The protein localises to the cell inner membrane. Its function is as follows. F(1)F(0) ATP synthase produces ATP from ADP in the presence of a proton or sodium gradient. F-type ATPases consist of two structural domains, F(1) containing the extramembraneous catalytic core and F(0) containing the membrane proton channel, linked together by a central stalk and a peripheral stalk. During catalysis, ATP synthesis in the catalytic domain of F(1) is coupled via a rotary mechanism of the central stalk subunits to proton translocation. Functionally, component of the F(0) channel, it forms part of the peripheral stalk, linking F(1) to F(0). The sequence is that of ATP synthase subunit b 1 from Xanthobacter autotrophicus (strain ATCC BAA-1158 / Py2).